Here is a 154-residue protein sequence, read N- to C-terminus: Large ribosomal subunit protein bL17 (154 aa).

The segment at 127–154 is disordered; the sequence is TAAKQDRAKRVKGSKKAETEKEGGESAE. Positions 141–154 are enriched in basic and acidic residues; the sequence is KKAETEKEGGESAE.

The protein belongs to the bacterial ribosomal protein bL17 family. As to quaternary structure, part of the 50S ribosomal subunit. Contacts protein L32.

The protein is Large ribosomal subunit protein bL17 of Chlorobaculum parvum (strain DSM 263 / NCIMB 8327) (Chlorobium vibrioforme subsp. thiosulfatophilum).